The chain runs to 132 residues: MSSRREIRWGIAHIYASQNNTLLTISDLTGAEIISRASGGMVVKADREKSSPYAAMLAANKAASDALEKGIMALHIKVRAPGGYGSKTPGPGAQPAIRALARAGFIIGRIEDVTPIPHDTIRRPGGRRGRRV.

Belongs to the universal ribosomal protein uS11 family. In terms of assembly, part of the 30S ribosomal subunit.

Its function is as follows. Located on the platform of the 30S subunit. This is Small ribosomal subunit protein uS11 from Saccharolobus solfataricus (strain ATCC 35092 / DSM 1617 / JCM 11322 / P2) (Sulfolobus solfataricus).